The primary structure comprises 373 residues: Alanine racemase (373 aa).

Lysine 35 functions as the Proton acceptor; specific for D-alanine in the catalytic mechanism. The residue at position 35 (lysine 35) is an N6-(pyridoxal phosphate)lysine. Arginine 130 is a binding site for substrate. Catalysis depends on tyrosine 253, which acts as the Proton acceptor; specific for L-alanine. Residue methionine 305 participates in substrate binding.

Belongs to the alanine racemase family. It depends on pyridoxal 5'-phosphate as a cofactor.

It catalyses the reaction L-alanine = D-alanine. The protein operates within amino-acid biosynthesis; D-alanine biosynthesis; D-alanine from L-alanine: step 1/1. Functionally, catalyzes the interconversion of L-alanine and D-alanine. May also act on other amino acids. The protein is Alanine racemase (alr) of Cupriavidus necator (strain ATCC 17699 / DSM 428 / KCTC 22496 / NCIMB 10442 / H16 / Stanier 337) (Ralstonia eutropha).